Consider the following 548-residue polypeptide: Methyl-accepting chemotaxis protein HlyB (548 aa).

The Cytoplasmic portion of the chain corresponds to 1-10; it reads MIINKFSLKW. A helical transmembrane segment spans residues 11 to 31; the sequence is MLAIAVAIPAIALLFVAFTSL. The Periplasmic portion of the chain corresponds to 32–199; sequence NTMSVMQAQS…SFEAGRTKQM (168 aa). Residues 200–220 form a helical membrane-spanning segment; it reads VIIAAGLIISFITSLVIITNL. Residues 218 to 271 enclose the HAMP domain; that stretch reads TNLRSRVAYLKDRMSSAAANLSLRTRLELDGNDELCDIGKSFNAFIDKVHHSIE. Residues 221-548 are Cytoplasmic-facing; sequence RSRVAYLKDR…LDKLVGSFEL (328 aa). Positions 276-512 constitute a Methyl-accepting transducer domain; that stretch reads NSKELATMAS…DINRNVEDIN (237 aa).

This sequence belongs to the methyl-accepting chemotaxis (MCP) protein family.

It is found in the cell inner membrane. In terms of biological role, chemotactic-signal transducers respond to changes in the concentration of attractants and repellents in the environment, transduce a signal from the outside to the inside of the cell, and facilitate sensory adaptation through the variation of the level of methylation. This Vibrio cholerae serotype O1 (strain ATCC 39315 / El Tor Inaba N16961) protein is Methyl-accepting chemotaxis protein HlyB (hlyB).